We begin with the raw amino-acid sequence, 551 residues long: GMP synthase [glutamine-hydrolyzing] (551 aa).

One can recognise a Glutamine amidotransferase type-1 domain in the interval 40 to 233; it reads KILIVDFGSQ…VRKIAGLTGD (194 aa). The active-site Nucleophile is Cys-117. Catalysis depends on residues His-207 and Glu-209. In terms of domain architecture, GMPS ATP-PPase spans 234 to 426; it reads WTMRAFREEE…LGLPEIFVGR (193 aa). 261–267 serves as a coordination point for ATP; sequence SGGVDSA.

As to quaternary structure, homodimer.

The catalysed reaction is XMP + L-glutamine + ATP + H2O = GMP + L-glutamate + AMP + diphosphate + 2 H(+). Its pathway is purine metabolism; GMP biosynthesis; GMP from XMP (L-Gln route): step 1/1. Catalyzes the synthesis of GMP from XMP. This Bradyrhizobium diazoefficiens (strain JCM 10833 / BCRC 13528 / IAM 13628 / NBRC 14792 / USDA 110) protein is GMP synthase [glutamine-hydrolyzing].